The sequence spans 34 residues: Turripeptide OL127 (34 aa).

Post-translationally, contains 4 disulfide bonds. As to expression, expressed by the venom duct.

The protein localises to the secreted. Functionally, acts as a neurotoxin by inhibiting an ion channel. In Iotyrris olangoensis (Sea snail), this protein is Turripeptide OL127.